Here is a 186-residue protein sequence, read N- to C-terminus: Mitoferrin-2B (186 aa).

The Solcar repeat unit spans residues 75–163 (SNVTAHMLAG…FACYEKLKKT (89 aa)). 3 consecutive transmembrane segments (helical) span residues 77 to 96 (VTAH…CLMY), 137 to 157 (RGLN…FACY), and 172 to 185 (GNCH…NSCP).

It belongs to the mitochondrial carrier (TC 2.A.29) family.

The protein localises to the mitochondrion inner membrane. It catalyses the reaction Fe(2+)(in) = Fe(2+)(out). Mitochondrial iron transporter that mediates iron uptake. Probably required for heme synthesis of hemoproteins and Fe-S cluster assembly in non-erythroid cells. The protein is Mitoferrin-2B (slc25a28-b) of Xenopus laevis (African clawed frog).